A 353-amino-acid chain; its full sequence is Photosystem II D2 protein (353 aa).

N-acetylthreonine is present on threonine 2. Threonine 2 is modified (phosphothreonine). A helical membrane pass occupies residues 41-61 (CAYFALGGWFTGTTFVTSWYT). Histidine 118 contacts chlorophyll a. Residues 125–141 (GFMLRQFELARSVQLRP) form a helical membrane-spanning segment. 2 residues coordinate pheophytin a: glutamine 130 and asparagine 143. Residues 153-166 (VFISVFFIYPLGQS) form a helical membrane-spanning segment. Histidine 198 is a chlorophyll a binding site. Residues 208–228 (AALLCAIHGATVENTLFEDGD) traverse the membrane as a helical segment. 2 residues coordinate a plastoquinone: histidine 215 and phenylalanine 262. Histidine 215 is a binding site for Fe cation. Residue histidine 269 coordinates Fe cation. Residues 279–295 (GLWMSALGVVGLALNLR) traverse the membrane as a helical segment.

The protein belongs to the reaction center PufL/M/PsbA/D family. As to quaternary structure, PSII is composed of 1 copy each of membrane proteins PsbA, PsbB, PsbC, PsbD, PsbE, PsbF, PsbH, PsbI, PsbJ, PsbK, PsbL, PsbM, PsbT, PsbX, PsbY, PsbZ, Psb30/Ycf12, at least 3 peripheral proteins of the oxygen-evolving complex and a large number of cofactors. It forms dimeric complexes. Requires The D1/D2 heterodimer binds P680, chlorophylls that are the primary electron donor of PSII, and subsequent electron acceptors. It shares a non-heme iron and each subunit binds pheophytin, quinone, additional chlorophylls, carotenoids and lipids. There is also a Cl(-1) ion associated with D1 and D2, which is required for oxygen evolution. The PSII complex binds additional chlorophylls, carotenoids and specific lipids. as cofactor.

The protein localises to the plastid membrane. It catalyses the reaction 2 a plastoquinone + 4 hnu + 2 H2O = 2 a plastoquinol + O2. Its function is as follows. Photosystem II (PSII) is a light-driven water:plastoquinone oxidoreductase that uses light energy to abstract electrons from H(2)O, generating O(2) and a proton gradient subsequently used for ATP formation. It consists of a core antenna complex that captures photons, and an electron transfer chain that converts photonic excitation into a charge separation. The D1/D2 (PsbA/PsbD) reaction center heterodimer binds P680, the primary electron donor of PSII as well as several subsequent electron acceptors. D2 is needed for assembly of a stable PSII complex. This is Photosystem II D2 protein from Cuscuta reflexa (Southern Asian dodder).